A 3014-amino-acid polypeptide reads, in one-letter code: Cadherin EGF LAG seven-pass G-type receptor 1 (3014 aa).

A signal peptide spans 1-20; sequence MAPPPPPVLPVLLLLAAAAA. Over 22 to 2469 the chain is Extracellular; sequence PAMGLRAAAW…RENGEVLPLK (2448 aa). The segment at 205–242 is disordered; sequence AGTPSASPSPSPPLPPNLPEARAGPARRARRGTSGRGS. Over residues 211 to 222 the composition is skewed to pro residues; the sequence is SPSPSPPLPPNL. Cadherin domains lie at 246 to 353, 354 to 459, 460 to 565, 566 to 687, 688 to 789, 790 to 892, 893 to 999, 1000 to 1101, and 1106 to 1224; these read PMPN…SPVF, EQSE…YPQF, SEQN…EPIF, VSSP…DPVF, TQPT…RPVF, QSSH…APQF, LWDF…APMF, EKDE…PPVL, and ILFN…SPLL. Asn-403, Asn-546, Asn-634, and Asn-778 each carry an N-linked (GlcNAc...) asparagine glycan. Residues Asn-1114, Asn-1139, Asn-1213, Asn-1249, Asn-1259, and Asn-1287 are each glycosylated (N-linked (GlcNAc...) asparagine). One can recognise an EGF-like 1; calcium-binding domain in the interval 1303-1361; it reads DDNICLREPCENYMKCVSVLRFDSSAPFLSSTTVLFRPIHPINGLRCRCPPGFTGDYCE. 9 disulfide bridges follow: Cys-1307/Cys-1318, Cys-1312/Cys-1349, Cys-1351/Cys-1360, Cys-1367/Cys-1378, Cys-1372/Cys-1387, Cys-1389/Cys-1398, Cys-1407/Cys-1418, Cys-1412/Cys-1428, and Cys-1430/Cys-1440. In terms of domain architecture, EGF-like 2; calcium-binding spans 1363-1399; the sequence is EIDLCYSDPCGANGRCRSREGGYTCECFEDFTGEHCE. An EGF-like 3; calcium-binding domain is found at 1403-1441; sequence RSGRCANGVCKNGGTCVNLLIGGFHCVCPPGEYERPYCE. A Laminin G-like 1 domain is found at 1442-1646; sequence VTTRSFPPQS…IANNGTREGC (205 aa). 3 N-linked (GlcNAc...) asparagine glycosylation sites follow: Asn-1576, Asn-1623, and Asn-1640. 13 cysteine pairs are disulfide-bonded: Cys-1620–Cys-1646, Cys-1653–Cys-1664, Cys-1658–Cys-1673, Cys-1675–Cys-1684, Cys-1840–Cys-1870, Cys-1876–Cys-1887, Cys-1881–Cys-1896, Cys-1898–Cys-1907, Cys-1911–Cys-1922, Cys-1916–Cys-1934, Cys-1936–Cys-1945, Cys-1953–Cys-1966, and Cys-1968–Cys-1978. One can recognise an EGF-like 4; calcium-binding domain in the interval 1649 to 1685; it reads RRNFCDGRRCQNGGTCVNRWNMYLCECPLRFGGKNCE. Residue Asn-1666 is modified to (3R)-3-hydroxyasparagine. The 182-residue stretch at 1689 to 1870 folds into the Laminin G-like 2 domain; sequence PHPQLFSGES…ALKVRVKDGC (182 aa). One can recognise an EGF-like 5; calcium-binding domain in the interval 1872-1907; it reads VDDPCTSSPCPPNSRCHDAWEDYSCVCDKGYLGINC. Position 1889 is a (3R)-3-hydroxyaspartate (Asp-1889). The EGF-like 6; calcium-binding domain occupies 1908–1946; that stretch reads VDACHLNPCENMGACVRSPGSPQGYVCECGPSHYGPYCE. Residues 1947 to 1979 form the EGF-like 7; calcium-binding domain; sequence NKLDLPCPRGWWGNPVCGPCHCAVSKGFDPDCN. An N-linked (GlcNAc...) asparagine glycan is attached at Asn-1979. An EGF-like 8; calcium-binding domain is found at 1981-2016; that stretch reads TNGQCQCKENYYKLLAQDTCLPCDCFPHGSHSRTCD. Disulfide bonds link Cys-1985–Cys-2000, Cys-1987–Cys-2003, Cys-2005–Cys-2015, Cys-2024–Cys-2033, and Cys-2036–Cys-2048. In terms of domain architecture, Laminin EGF-like spans 2003 to 2050; sequence CDCFPHGSHSRTCDMATGQCACKPGVIGRQCNRCDNPFAEVTTLGCEV. 3 N-linked (GlcNAc...) asparagine glycosylation sites follow: Asn-2103, Asn-2122, and Asn-2257. A disordered region spans residues 2291–2328; the sequence is PEEKEGPLLRPAGRRTTPQTTRPGPGTEREAPISRRRR. Residues 2297–2461 form the GAIN-B domain; the sequence is PLLRPAGRRT…AVLMDISRRE (165 aa). The span at 2300 to 2316 shows a compositional bias: low complexity; that stretch reads RPAGRRTTPQTTRPGPG. Disulfide bonds link Cys-2411–Cys-2443 and Cys-2431–Cys-2445. Positions 2411 to 2461 are GPS; the sequence is CVFWNHSLAVGGTGGWSARGCELLSRNRTHVACQCSHTASFAVLMDISRRE. N-linked (GlcNAc...) asparagine glycans are attached at residues Asn-2415 and Asn-2437. The chain crosses the membrane as a helical span at residues 2470–2490; the sequence is IVTYAAVSLSLAALLVAFVLL. Topologically, residues 2491–2501 are cytoplasmic; sequence SLVRMLRSNLH. Residues 2502-2522 traverse the membrane as a helical segment; the sequence is SIHKHLAVALFLSQLVFVIGI. N-linked (GlcNAc...) asparagine glycosylation occurs at Asn-2523. Topologically, residues 2523–2527 are extracellular; that stretch reads NQTEN. A helical membrane pass occupies residues 2528-2548; that stretch reads PFLCTVVAILLHYIYMSTFAW. At 2549–2572 the chain is on the cytoplasmic side; sequence TLVESLHVYRMLTEVRNIDTGPMR. The helical transmembrane segment at 2573-2593 threads the bilayer; it reads FYYVVGWGIPAIVTGLAVGLD. Topologically, residues 2594 to 2611 are extracellular; that stretch reads PQGYGNPDFCWLSLQDTL. A helical transmembrane segment spans residues 2612–2632; the sequence is IWSFAGPIGAVIIINTVTSVL. The Cytoplasmic portion of the chain corresponds to 2633 to 2655; the sequence is SAKVSCQRKHHYYGKKGIVSLLR. A helical transmembrane segment spans residues 2656 to 2676; it reads TAFLLLLLISATWLLGLLAVN. At 2677 to 2683 the chain is on the extracellular side; it reads RDALSFH. A helical transmembrane segment spans residues 2684–2704; that stretch reads YLFAIFSGLQGPFVLLFHCVL. The Cytoplasmic segment spans residues 2705–3014; sequence NQEVRKHLKG…QADGSDSEKP (310 aa). Phosphoserine occurs at positions 2761 and 2764. Disordered regions lie at residues 2777 to 2939 and 2954 to 3014; these read SSGL…PPPL and LADC…SEKP. Residues 2796 to 2806 show a composition bias toward basic and acidic residues; the sequence is SCKDPPGHDSD. Low complexity predominate over residues 2814 to 2825; the sequence is DEQSSSYASSHS. Ser-2871 and Ser-2873 each carry phosphoserine. A compositionally biased stretch (basic and acidic residues) spans 2876–2904; sequence PSGKPRLKVETKVSVELHREEQGSHRGEY. The span at 2960–2969 shows a compositional bias: low complexity; it reads SPTSSRTSSL. A compositionally biased stretch (basic and acidic residues) spans 2983–2992; sequence PGREPGRDHL.

This sequence belongs to the G-protein coupled receptor 2 family. LN-TM7 subfamily. The iron and 2-oxoglutarate dependent 3-hydroxylation of aspartate and asparagine is (R) stereospecific within EGF domains.

It localises to the cell membrane. Functionally, receptor that may have an important role in cell/cell signaling during nervous system formation. The protein is Cadherin EGF LAG seven-pass G-type receptor 1 (CELSR1) of Homo sapiens (Human).